We begin with the raw amino-acid sequence, 439 residues long: ATP-dependent RNA helicase SUB2 (439 aa).

Residues 1-19 (MSHEGEEDLLEYSDNEQEI) show a composition bias toward acidic residues. Residues 1 to 48 (MSHEGEEDLLEYSDNEQEIQVDNKETAVEGTTENEATQENGEADKKGS) are disordered. Residues 29–40 (EGTTENEATQEN) are compositionally biased toward polar residues. The short motif at 55-83 (TGFKDFLLKPELSRAIIDCGFEHPSEVQQ) is the Q motif element. Residues 86-261 (IPQSIHGTDV…RRFLQNPLEI (176 aa)) enclose the Helicase ATP-binding domain. 99–106 (AKSGLGKT) is a binding site for ATP. The DECD box motif lies at 208–211 (DECD). In terms of domain architecture, Helicase C-terminal spans 273–434 (GLQQYYIKLE…EFPEEGIDPS (162 aa)).

It belongs to the DEAD box helicase family. DECD subfamily.

The protein resides in the nucleus. The catalysed reaction is ATP + H2O = ADP + phosphate + H(+). ATP-binding RNA helicase involved in transcription elongation and required for the export of mRNA out of the nucleus. SUB2 also plays a role in pre-mRNA splicing and spliceosome assembly. May be involved in rDNA and telomeric silencing, and maintenance of genome integrity. The polypeptide is ATP-dependent RNA helicase SUB2 (SUB2) (Candida glabrata (strain ATCC 2001 / BCRC 20586 / JCM 3761 / NBRC 0622 / NRRL Y-65 / CBS 138) (Yeast)).